The sequence spans 100 residues: Ribosomal biogenesis factor (100 aa).

At S19 the chain carries Phosphoserine. Residue K21 is modified to N6-acetyllysine. Position 69 is a phosphoserine (S69).

Associates with the pre-60S ribosomal particles.

The protein localises to the nucleus. It is found in the nucleolus. Its function is as follows. Trans-acting factor in ribosome biogenesis required for efficient 40S and 60S subunit production. This Bos taurus (Bovine) protein is Ribosomal biogenesis factor (RBIS).